We begin with the raw amino-acid sequence, 123 residues long: Non-specific lipid-transfer protein (123 aa).

The signal sequence occupies residues 1 to 25 (MAVKKMVEAVFVVGLVVTMMNVWGA). 4 cysteine pairs are disulfide-bonded: cysteine 34/cysteine 82, cysteine 44/cysteine 59, cysteine 60/cysteine 104, and cysteine 80/cysteine 119.

The protein belongs to the plant LTP family.

Plant non-specific lipid-transfer proteins transfer phospholipids as well as galactolipids across membranes. May play a role in wax or cutin deposition in the cell walls of expanding epidermal cells and certain secretory tissues. The polypeptide is Non-specific lipid-transfer protein (Pinus taeda (Loblolly pine)).